The following is a 394-amino-acid chain: Elongation factor Tu (394 aa).

The region spanning 10–204 (KEHANIGTIG…AVDDYIPTPE (195 aa)) is the tr-type G domain. A G1 region spans residues 19 to 26 (GHVDHGKT). A GTP-binding site is contributed by 19 to 26 (GHVDHGKT). A Mg(2+)-binding site is contributed by Thr26. Residues 60–64 (GITIN) are G2. Positions 81–84 (DCPG) are G3. GTP-binding positions include 81–85 (DCPGH) and 136–139 (NKVD). Residues 136–139 (NKVD) are G4. The G5 stretch occupies residues 174-176 (SAL).

The protein belongs to the TRAFAC class translation factor GTPase superfamily. Classic translation factor GTPase family. EF-Tu/EF-1A subfamily. Monomer.

The protein localises to the cytoplasm. The catalysed reaction is GTP + H2O = GDP + phosphate + H(+). GTP hydrolase that promotes the GTP-dependent binding of aminoacyl-tRNA to the A-site of ribosomes during protein biosynthesis. The chain is Elongation factor Tu from Staphylococcus epidermidis (strain ATCC 35984 / DSM 28319 / BCRC 17069 / CCUG 31568 / BM 3577 / RP62A).